A 634-amino-acid polypeptide reads, in one-letter code: DNA gyrase subunit B (634 aa).

In terms of domain architecture, Toprim spans 416 to 530 (REIYIVEGDS…NGYIYIAMPP (115 aa)). Mg(2+) contacts are provided by E422, D495, and D497.

It belongs to the type II topoisomerase GyrB family. Heterotetramer, composed of two GyrA and two GyrB chains. In the heterotetramer, GyrA contains the active site tyrosine that forms a transient covalent intermediate with DNA, while GyrB binds cofactors and catalyzes ATP hydrolysis. Requires Mg(2+) as cofactor. The cofactor is Mn(2+). Ca(2+) serves as cofactor.

The protein localises to the cytoplasm. It carries out the reaction ATP-dependent breakage, passage and rejoining of double-stranded DNA.. A type II topoisomerase that negatively supercoils closed circular double-stranded (ds) DNA in an ATP-dependent manner to modulate DNA topology and maintain chromosomes in an underwound state. Negative supercoiling favors strand separation, and DNA replication, transcription, recombination and repair, all of which involve strand separation. Also able to catalyze the interconversion of other topological isomers of dsDNA rings, including catenanes and knotted rings. Type II topoisomerases break and join 2 DNA strands simultaneously in an ATP-dependent manner. This is DNA gyrase subunit B from Borreliella burgdorferi (strain ATCC 35210 / DSM 4680 / CIP 102532 / B31) (Borrelia burgdorferi).